A 284-amino-acid chain; its full sequence is Acetylglutamate kinase (284 aa).

Residues 66-67 (GG), Arg88, and Asn179 contribute to the substrate site.

This sequence belongs to the acetylglutamate kinase family. ArgB subfamily.

Its subcellular location is the cytoplasm. The enzyme catalyses N-acetyl-L-glutamate + ATP = N-acetyl-L-glutamyl 5-phosphate + ADP. Its pathway is amino-acid biosynthesis; L-arginine biosynthesis; N(2)-acetyl-L-ornithine from L-glutamate: step 2/4. Its function is as follows. Catalyzes the ATP-dependent phosphorylation of N-acetyl-L-glutamate. This chain is Acetylglutamate kinase, found in Actinobacillus pleuropneumoniae serotype 7 (strain AP76).